The sequence spans 474 residues: Protein anachronism (474 aa).

Residues 1 to 33 (MASAMRGEKCERSRIRELVLILSLITMAGDSRA) form the signal peptide. N-linked (GlcNAc...) asparagine glycans are attached at residues Asn-54, Asn-62, Asn-73, Asn-116, and Asn-144. Positions 173-195 (NPGQTREHNPGQASTQPISTENP) are disordered. Residues 183–195 (GQASTQPISTENP) are compositionally biased toward polar residues. N-linked (GlcNAc...) asparagine glycosylation is present at Asn-342. Over residues 359 to 372 (FIESTTSNSPTIDN) the composition is skewed to polar residues. The disordered stretch occupies residues 359–474 (FIESTTSNSP…HHRIPAHKQE (116 aa)). Composition is skewed to basic residues over residues 390–400 (LVHHRRHHHNH) and 437–474 (NHHR…HKQE).

Synthesized in some glial cells and secreted.

The protein localises to the secreted. Its function is as follows. Negatively regulates proliferation of neuronal precursor cells, thereby controlling the timing of postembryonic neurogenesis. This chain is Protein anachronism (ana), found in Drosophila melanogaster (Fruit fly).